The chain runs to 621 residues: Lethal(3)malignant brain tumor-like protein 4 (621 aa).

A disordered region spans residues 1–48 (MRQPNRKRKLSLESTERMNQDRCTGQTEEEKKPGEVTTPSKRESSVTT). Composition is skewed to basic and acidic residues over residues 10–20 (LSLESTERMNQ) and 28–44 (EEEKKPGEVTTPSKRES). 3 MBT repeats span residues 52–152 (WSWE…LHIP), 160–260 (FVWM…LVAP), and 269–364 (FSWT…LEVP). The CCHHC-type zinc finger occupies 370–414 (VKILPGQPACPTPGCRGIGHIRGPRYAGHHSAFGCPYSDVNLKRE). Zn(2+)-binding residues include C379, C384, H398, and C404. Positions 543-607 (WTVDEVAEFV…YNSILMFRNS (65 aa)) constitute an SAM domain.

The protein localises to the nucleus. Putative Polycomb group (PcG) protein. PcG proteins maintain the transcriptionally repressive state of genes, probably via a modification of chromatin, rendering it heritably changed in its expressibility. The polypeptide is Lethal(3)malignant brain tumor-like protein 4 (L3mbtl4) (Mus musculus (Mouse)).